The chain runs to 428 residues: UPF0597 protein Dde_0807 (428 aa).

Belongs to the UPF0597 family.

In Oleidesulfovibrio alaskensis (strain ATCC BAA-1058 / DSM 17464 / G20) (Desulfovibrio alaskensis), this protein is UPF0597 protein Dde_0807.